Reading from the N-terminus, the 420-residue chain is Serine hydroxymethyltransferase (420 aa).

Residues L121 and 125–127 (GHL) contribute to the (6S)-5,6,7,8-tetrahydrofolate site. K230 carries the post-translational modification N6-(pyridoxal phosphate)lysine. 355–357 (SPF) serves as a coordination point for (6S)-5,6,7,8-tetrahydrofolate.

It belongs to the SHMT family. Homodimer. Pyridoxal 5'-phosphate serves as cofactor.

The protein resides in the cytoplasm. It carries out the reaction (6R)-5,10-methylene-5,6,7,8-tetrahydrofolate + glycine + H2O = (6S)-5,6,7,8-tetrahydrofolate + L-serine. It functions in the pathway one-carbon metabolism; tetrahydrofolate interconversion. Its pathway is amino-acid biosynthesis; glycine biosynthesis; glycine from L-serine: step 1/1. Its function is as follows. Catalyzes the reversible interconversion of serine and glycine with tetrahydrofolate (THF) serving as the one-carbon carrier. This reaction serves as the major source of one-carbon groups required for the biosynthesis of purines, thymidylate, methionine, and other important biomolecules. Also exhibits THF-independent aldolase activity toward beta-hydroxyamino acids, producing glycine and aldehydes, via a retro-aldol mechanism. The polypeptide is Serine hydroxymethyltransferase (Streptococcus mutans serotype c (strain ATCC 700610 / UA159)).